Reading from the N-terminus, the 83-residue chain is Toxin TdNa5 (83 aa).

A signal peptide spans 1 to 20 (MKTIIFFIACLMLIDVVVES). One can recognise an LCN-type CS-alpha/beta domain in the interval 21–82 (KDGYIIEHRG…IFDSNNNKCG (62 aa)). 4 disulfide bridges follow: C31–C81, C35–C57, C43–C62, and C47–C64. C81 carries the cysteine amide modification.

This sequence belongs to the long (4 C-C) scorpion toxin superfamily. Sodium channel inhibitor family. Beta subfamily. In terms of tissue distribution, expressed by the venom gland.

Its subcellular location is the secreted. Functionally, inhibits the sodium currents (Nav) in an apparent irreversible manner. Produces small depolarization and induces repetitive firing in squid axons. Is specific for arthropods (crickets, triatomides, crabs and squids), but is non-toxic to mice. Shows antibacterial activity against both Gram-positive and Gram-negative bacteria. This chain is Toxin TdNa5, found in Tityus discrepans (Venezuelan scorpion).